Reading from the N-terminus, the 177-residue chain is Large ribosomal subunit protein uL6 (177 aa).

This sequence belongs to the universal ribosomal protein uL6 family. Part of the 50S ribosomal subunit.

Its function is as follows. This protein binds to the 23S rRNA, and is important in its secondary structure. It is located near the subunit interface in the base of the L7/L12 stalk, and near the tRNA binding site of the peptidyltransferase center. This Polynucleobacter necessarius subsp. necessarius (strain STIR1) protein is Large ribosomal subunit protein uL6.